The sequence spans 257 residues: tRNA (guanine-N(1)-)-methyltransferase (257 aa).

S-adenosyl-L-methionine contacts are provided by residues Gly-117 and 137-142 (LGDFVL).

The protein belongs to the RNA methyltransferase TrmD family. In terms of assembly, homodimer.

The protein localises to the cytoplasm. It catalyses the reaction guanosine(37) in tRNA + S-adenosyl-L-methionine = N(1)-methylguanosine(37) in tRNA + S-adenosyl-L-homocysteine + H(+). Functionally, specifically methylates guanosine-37 in various tRNAs. In Bordetella pertussis (strain Tohama I / ATCC BAA-589 / NCTC 13251), this protein is tRNA (guanine-N(1)-)-methyltransferase.